We begin with the raw amino-acid sequence, 202 residues long: Pectinesterase inhibitor 11 (202 aa).

The signal sequence occupies residues 1-21 (MAKQIFYTLFLFLLSTAILTA). Cysteine 43 and cysteine 52 form a disulfide bridge. Asparagine 76 carries N-linked (GlcNAc...) asparagine glycosylation. Residues cysteine 109 and cysteine 160 are joined by a disulfide bond.

This sequence belongs to the PMEI family.

The protein localises to the secreted. It is found in the extracellular space. The protein resides in the apoplast. In terms of biological role, pectin methylesterase (PME) inhibitor involved in the maintenance of cell wall integrity in response to necrotrophic pathogens. Modulates PME activity and pectin methylesterification during infection by Botrytis cinerea and contributes to resistance against the pathogen. This Arabidopsis thaliana (Mouse-ear cress) protein is Pectinesterase inhibitor 11.